The chain runs to 131 residues: Transcription antitermination protein NusB (131 aa).

It belongs to the NusB family.

Involved in transcription antitermination. Required for transcription of ribosomal RNA (rRNA) genes. Binds specifically to the boxA antiterminator sequence of the ribosomal RNA (rrn) operons. The chain is Transcription antitermination protein NusB from Bacillus pumilus (strain SAFR-032).